A 118-amino-acid polypeptide reads, in one-letter code: NADH-quinone oxidoreductase subunit A (118 aa).

3 helical membrane-spanning segments follow: residues 6-26, 64-84, and 87-107; these read LPVLIFLLVALVVGVAPLLMG, AILFILFDLEIAFLFPWAVVF, and IGMTGFLAMMLFLAILVVGFI.

Belongs to the complex I subunit 3 family. As to quaternary structure, NDH-1 is composed of 14 different subunits. Subunits NuoA, H, J, K, L, M, N constitute the membrane sector of the complex.

The protein resides in the cell inner membrane. The enzyme catalyses a quinone + NADH + 5 H(+)(in) = a quinol + NAD(+) + 4 H(+)(out). Its function is as follows. NDH-1 shuttles electrons from NADH, via FMN and iron-sulfur (Fe-S) centers, to quinones in the respiratory chain. The immediate electron acceptor for the enzyme in this species is believed to be ubiquinone. Couples the redox reaction to proton translocation (for every two electrons transferred, four hydrogen ions are translocated across the cytoplasmic membrane), and thus conserves the redox energy in a proton gradient. This is NADH-quinone oxidoreductase subunit A from Acidithiobacillus ferrooxidans (strain ATCC 53993 / BNL-5-31) (Leptospirillum ferrooxidans (ATCC 53993)).